Consider the following 437-residue polypeptide: Coiled-coil domain-containing protein 78 (437 aa).

3 coiled-coil regions span residues 83–114 (HLREQHEAEVFELRREILRLESRVLELELHGN), 147–287 (EELK…QRQE), and 360–408 (QRLQ…YKQE).

This sequence belongs to the CCDC78 family.

It is found in the cytoplasm. It localises to the cytoskeleton. Its subcellular location is the microtubule organizing center. The protein resides in the centrosome. The protein localises to the centriole. It is found in the perinuclear region. It localises to the cell membrane. Its subcellular location is the sarcolemma. The protein resides in the sarcoplasmic reticulum. Functionally, component of the deuterosome, a structure that promotes de novo centriole amplification in multiciliated cells that can generate more than 100 centrioles. Deuterosome-mediated centriole amplification occurs in terminally differentiated multiciliated cells (G1/0) and not in S phase. Essential for centriole amplification and is required for CEP152 localization to the deuterosome. This chain is Coiled-coil domain-containing protein 78 (Ccdc78), found in Mus musculus (Mouse).